Reading from the N-terminus, the 246-residue chain is Cell division protein ZapD (246 aa).

The protein belongs to the ZapD family. In terms of assembly, interacts with FtsZ.

It is found in the cytoplasm. Functionally, cell division factor that enhances FtsZ-ring assembly. Directly interacts with FtsZ and promotes bundling of FtsZ protofilaments, with a reduction in FtsZ GTPase activity. The sequence is that of Cell division protein ZapD from Vibrio vulnificus (strain CMCP6).